Here is a 305-residue protein sequence, read N- to C-terminus: Ribosomal RNA small subunit methyltransferase H (305 aa).

S-adenosyl-L-methionine-binding positions include 47–49, Asp66, Phe93, Asp108, and Gln115; that span reads GGH.

Belongs to the methyltransferase superfamily. RsmH family.

It localises to the cytoplasm. It catalyses the reaction cytidine(1402) in 16S rRNA + S-adenosyl-L-methionine = N(4)-methylcytidine(1402) in 16S rRNA + S-adenosyl-L-homocysteine + H(+). Specifically methylates the N4 position of cytidine in position 1402 (C1402) of 16S rRNA. This chain is Ribosomal RNA small subunit methyltransferase H, found in Prochlorococcus marinus (strain MIT 9211).